We begin with the raw amino-acid sequence, 1093 residues long: Semaphorin-5B (1093 aa).

The first 19 residues, 1-19, serve as a signal peptide directing secretion; the sequence is MVVPGPLALSLLLSSLTLL. The Extracellular portion of the chain corresponds to 20–978; it reads VSHLSSSQDI…TSCGGFNLIH (959 aa). The region spanning 45–495 is the Sema domain; the sequence is HPIVAFEDLK…LSDRVLRVPL (451 aa). N-linked (GlcNAc...) asparagine glycosylation is found at asparagine 59 and asparagine 95. Disulfide bonds link cysteine 114/cysteine 124 and cysteine 141/cysteine 150. N-linked (GlcNAc...) asparagine glycosylation is found at asparagine 157, asparagine 178, and asparagine 287. Disulfide bonds link cysteine 264-cysteine 367 and cysteine 288-cysteine 330. Residues asparagine 333, asparagine 378, asparagine 532, asparagine 539, asparagine 547, and asparagine 602 are each glycosylated (N-linked (GlcNAc...) asparagine). TSP type-1 domains lie at 551-605, 606-662, 664-713, 721-776, 795-850, 852-907, and 908-952; these read DGGF…NCSR, NGAW…TPCP, PIFW…EACP, WTPW…ACDT, NGGW…QACP, RGAW…QACP, and EGWS…RPCP. Disulfide bonds link cysteine 618/cysteine 655, cysteine 622/cysteine 661, cysteine 633/cysteine 645, cysteine 676/cysteine 707, cysteine 680/cysteine 712, and cysteine 691/cysteine 697. Asparagine 728 carries N-linked (GlcNAc...) asparagine glycosylation. 6 disulfide bridges follow: cysteine 807-cysteine 844, cysteine 811-cysteine 849, cysteine 822-cysteine 834, cysteine 864-cysteine 901, cysteine 868-cysteine 906, and cysteine 879-cysteine 891. Asparagine 944 carries an N-linked (GlcNAc...) asparagine glycan. Residues 979 to 999 form a helical membrane-spanning segment; the sequence is LIVTGVSCFLVSGLLTLAVYL. The Cytoplasmic segment spans residues 1000–1093; it reads SCQHCQRQSQ…SPGQRCFPNS (94 aa).

The protein belongs to the semaphorin family. In terms of tissue distribution, in adult, only detected in brain.

It is found in the membrane. In terms of biological role, may act as a positive axonal guidance cue. The sequence is that of Semaphorin-5B (Sema5b) from Mus musculus (Mouse).